Consider the following 311-residue polypeptide: p-hydroxybenzoic acid efflux pump subunit AaeA (311 aa).

A helical transmembrane segment spans residues 11–31 (IGITLLVVLLAVIAIFKVWAF).

It belongs to the membrane fusion protein (MFP) (TC 8.A.1) family.

It is found in the cell inner membrane. Its function is as follows. Forms an efflux pump with AaeB. This Yersinia enterocolitica serotype O:8 / biotype 1B (strain NCTC 13174 / 8081) protein is p-hydroxybenzoic acid efflux pump subunit AaeA.